Consider the following 303-residue polypeptide: Deoxyhypusine hydroxylase (303 aa).

N-acetylmethionine is present on M1. HEAT-like PBS-type repeat units lie at residues 23 to 49 (ARFRALFTLRGLGGPVAISWISRAFDD), 54 to 80 (LKHELAYCLGQMQDRRAIPVLLDVLRD), 87 to 113 (VRHEAGEALGAIGDPEVLEILKQYSTD), 175 to 201 (DRYRAMFALRDAGGKEAALALAEGLRC), 206 to 232 (FRHEIGYVLGQMQHEAAVPQLAAALAQ), and 239 to 265 (VRHECAEALGAIARPACLAALRAHVAD). Fe cation is bound by residues H56, H89, and E90. Residues H208, H241, and E242 each contribute to the Fe cation site.

This sequence belongs to the deoxyhypusine hydroxylase family. It depends on Fe(2+) as a cofactor.

The enzyme catalyses [eIF5A protein]-deoxyhypusine + AH2 + O2 = [eIF5A protein]-hypusine + A + H2O. The protein operates within protein modification; eIF5A hypusination. Catalyzes the hydroxylation of the N(6)-(4-aminobutyl)-L-lysine intermediate produced by deoxyhypusine synthase/DHPS on a critical lysine of the eukaryotic translation initiation factor 5A/eIF-5A. This is the second step of the post-translational modification of that lysine into an unusual amino acid residue named hypusine. Hypusination is unique to mature eIF-5A factor and is essential for its function. This Bos taurus (Bovine) protein is Deoxyhypusine hydroxylase.